Here is a 215-residue protein sequence, read N- to C-terminus: Adenylate kinase (215 aa).

10 to 15 lines the ATP pocket; sequence GAGKGT. Residues 30–59 form an NMP region; it reads STGDMLRAAVKAGTELGLKAKSVMDSGGLV. AMP-binding positions include threonine 31, arginine 36, 57-59, 85-88, and glutamine 92; these read GLV and GFPR. The interval 122–159 is LID; sequence GRRVHEASGRVYHTVYNPPKIAGKDDITGEDLVQRKDD. Residues arginine 123 and 132 to 133 each bind ATP; that span reads VY. AMP-binding residues include arginine 156 and arginine 167. Glycine 201 serves as a coordination point for ATP.

It belongs to the adenylate kinase family. As to quaternary structure, monomer.

Its subcellular location is the cytoplasm. The catalysed reaction is AMP + ATP = 2 ADP. Its pathway is purine metabolism; AMP biosynthesis via salvage pathway; AMP from ADP: step 1/1. Catalyzes the reversible transfer of the terminal phosphate group between ATP and AMP. Plays an important role in cellular energy homeostasis and in adenine nucleotide metabolism. The protein is Adenylate kinase of Pseudomonas fluorescens (strain ATCC BAA-477 / NRRL B-23932 / Pf-5).